The primary structure comprises 449 residues: Glutamyl-tRNA reductase (449 aa).

Residues 49–52, serine 107, 112–114, and glutamine 118 contribute to the substrate site; these read TCNR and EPQ. Cysteine 50 (nucleophile) is an active-site residue. Residue 187-192 participates in NADP(+) binding; sequence GAGETI. A disordered region spans residues 418–449; that stretch reads QLVERSSEGDDSQQAGADGGAARGDRRAAGGS. Positions 440-449 are enriched in basic and acidic residues; it reads RGDRRAAGGS.

It belongs to the glutamyl-tRNA reductase family. In terms of assembly, homodimer.

The catalysed reaction is (S)-4-amino-5-oxopentanoate + tRNA(Glu) + NADP(+) = L-glutamyl-tRNA(Glu) + NADPH + H(+). Its pathway is porphyrin-containing compound metabolism; protoporphyrin-IX biosynthesis; 5-aminolevulinate from L-glutamyl-tRNA(Glu): step 1/2. Catalyzes the NADPH-dependent reduction of glutamyl-tRNA(Glu) to glutamate 1-semialdehyde (GSA). The polypeptide is Glutamyl-tRNA reductase (Halorhodospira halophila (strain DSM 244 / SL1) (Ectothiorhodospira halophila (strain DSM 244 / SL1))).